A 541-amino-acid chain; its full sequence is Arginine--tRNA ligase (541 aa).

The 'HIGH' region signature appears at 119-129; sequence ANPTGPLHIGH.

This sequence belongs to the class-I aminoacyl-tRNA synthetase family. Monomer.

The protein localises to the cytoplasm. It carries out the reaction tRNA(Arg) + L-arginine + ATP = L-arginyl-tRNA(Arg) + AMP + diphosphate. The protein is Arginine--tRNA ligase of Helicobacter pylori (strain HPAG1).